The chain runs to 251 residues: Phosphate import ATP-binding protein PstB (251 aa).

The 242-residue stretch at 5-246 folds into the ABC transporter domain; it reads IEIENFSAYY…PKNRLTEEYL (242 aa). Position 37 to 44 (37 to 44) interacts with ATP; that stretch reads GPSGCGKT.

Belongs to the ABC transporter superfamily. Phosphate importer (TC 3.A.1.7) family. As to quaternary structure, the complex is composed of two ATP-binding proteins (PstB), two transmembrane proteins (PstC and PstA) and a solute-binding protein (PstS).

It is found in the cell inner membrane. The enzyme catalyses phosphate(out) + ATP + H2O = ADP + 2 phosphate(in) + H(+). Part of the ABC transporter complex PstSACB involved in phosphate import. Responsible for energy coupling to the transport system. The polypeptide is Phosphate import ATP-binding protein PstB (Thermotoga maritima (strain ATCC 43589 / DSM 3109 / JCM 10099 / NBRC 100826 / MSB8)).